Here is a 231-residue protein sequence, read N- to C-terminus: Probable septum site-determining protein MinC (231 aa).

Positions Lys102–Thr125 are disordered.

Belongs to the MinC family. In terms of assembly, interacts with MinD and FtsZ.

In terms of biological role, cell division inhibitor that blocks the formation of polar Z ring septums. Rapidly oscillates between the poles of the cell to destabilize FtsZ filaments that have formed before they mature into polar Z rings. Prevents FtsZ polymerization. This chain is Probable septum site-determining protein MinC, found in Escherichia coli O139:H28 (strain E24377A / ETEC).